The following is a 65-amino-acid chain: ATP synthase F(0) complex subunit 8 (65 aa).

A helical transmembrane segment spans residues 8 to 24; the sequence is TWLTTILSMFLALFIIF. At Lys-53 the chain carries N6-acetyllysine; alternate. Lys-53 bears the N6-succinyllysine; alternate mark. Lys-56 carries the post-translational modification N6-acetyllysine.

This sequence belongs to the ATPase protein 8 family. In terms of assembly, component of the ATP synthase complex composed at least of ATP5F1A/subunit alpha, ATP5F1B/subunit beta, ATP5MC1/subunit c (homooctomer), MT-ATP6/subunit a, MT-ATP8/subunit 8, ATP5ME/subunit e, ATP5MF/subunit f, ATP5MG/subunit g, ATP5MK/subunit k, ATP5MJ/subunit j, ATP5F1C/subunit gamma, ATP5F1D/subunit delta, ATP5F1E/subunit epsilon, ATP5PF/subunit F6, ATP5PB/subunit b, ATP5PD/subunit d, ATP5PO/subunit OSCP. ATP synthase complex consists of a soluble F(1) head domain (subunits alpha(3) and beta(3)) - the catalytic core - and a membrane F(0) domain - the membrane proton channel (subunits c, a, 8, e, f, g, k and j). These two domains are linked by a central stalk (subunits gamma, delta, and epsilon) rotating inside the F1 region and a stationary peripheral stalk (subunits F6, b, d, and OSCP). Interacts with PRICKLE3.

It is found in the mitochondrion membrane. In terms of biological role, subunit 8, of the mitochondrial membrane ATP synthase complex (F(1)F(0) ATP synthase or Complex V) that produces ATP from ADP in the presence of a proton gradient across the membrane which is generated by electron transport complexes of the respiratory chain. ATP synthase complex consist of a soluble F(1) head domain - the catalytic core - and a membrane F(1) domain - the membrane proton channel. These two domains are linked by a central stalk rotating inside the F(1) region and a stationary peripheral stalk. During catalysis, ATP synthesis in the catalytic domain of F(1) is coupled via a rotary mechanism of the central stalk subunits to proton translocation. In vivo, can only synthesize ATP although its ATP hydrolase activity can be activated artificially in vitro. Part of the complex F(0) domain. The sequence is that of ATP synthase F(0) complex subunit 8 from Capra ibex ibex (Alpine ibex).